Here is a 156-residue protein sequence, read N- to C-terminus: Ribosomal RNA large subunit methyltransferase H (156 aa).

S-adenosyl-L-methionine is bound by residues L73, G104, and 123–128 (LSALTL).

Belongs to the RNA methyltransferase RlmH family. As to quaternary structure, homodimer.

The protein localises to the cytoplasm. The catalysed reaction is pseudouridine(1915) in 23S rRNA + S-adenosyl-L-methionine = N(3)-methylpseudouridine(1915) in 23S rRNA + S-adenosyl-L-homocysteine + H(+). In terms of biological role, specifically methylates the pseudouridine at position 1915 (m3Psi1915) in 23S rRNA. The polypeptide is Ribosomal RNA large subunit methyltransferase H (Shewanella denitrificans (strain OS217 / ATCC BAA-1090 / DSM 15013)).